A 580-amino-acid chain; its full sequence is Phosphatase and actin regulator 1 (580 aa).

S67 and S78 each carry phosphoserine. Position 104 is a phosphothreonine (T104). The short motif at 108–129 (RRRSKFANLGRIFKPWKWRKKK) is the Nuclear localization signal element. Residues 138-163 (AALERKISMRQSREELIKRGVLKEIY) form an RPEL 1 repeat. 2 disordered regions span residues 331–355 (EQRV…TKAG) and 376–410 (KENV…SSLY). Polar residues predominate over residues 335–345 (PCSTSYHSSGL). The span at 395-407 (EEEEEEEDEDDDS) shows a compositional bias: acidic residues. RPEL repeat units lie at residues 422 to 447 (DSLA…PRQT), 460 to 484 (TKLT…LKPR), and 498 to 523 (RRLT…IRFS). The tract at residues 462-494 (LTRRLSQRPTAEELEQRNILKPRNEQEEQEEKR) is disordered. Residue S467 is modified to Phosphoserine. Over residues 471–494 (TAEELEQRNILKPRNEQEEQEEKR) the composition is skewed to basic and acidic residues. Residue S505 is modified to Phosphoserine.

It belongs to the phosphatase and actin regulator family. In terms of assembly, interacts (via RPEL repeats) with ACTA1 and PPP1CA; ACTA1 and PPP1CA compete for the same binding site. Detected in umbilical vein endothelial cells.

Its subcellular location is the cytoplasm. The protein localises to the synapse. It is found in the nucleus. Binds actin monomers (G actin) and plays a role in multiple processes including the regulation of actin cytoskeleton dynamics, actin stress fibers formation, cell motility and survival, formation of tubules by endothelial cells, and regulation of PPP1CA activity. Involved in the regulation of cortical neuron migration and dendrite arborization. This chain is Phosphatase and actin regulator 1 (PHACTR1), found in Homo sapiens (Human).